The primary structure comprises 340 residues: Extracellular matrix protein-binding protein emp (340 aa).

The signal sequence occupies residues 1–26; sequence MKKKLLVLTMSTLFATQLINSNHANA.

Its subcellular location is the cell surface. In terms of biological role, adhesin that binds to the host cell extracellular matrix proteins fibronectin, fibrinogen, collagen, and vitronectin. The sequence is that of Extracellular matrix protein-binding protein emp (emp) from Staphylococcus aureus.